An 848-amino-acid chain; its full sequence is Dolabradiene synthase KSL4, chloroplastic (848 aa).

The transit peptide at 1–64 directs the protein to the chloroplast; sequence MASLSFASSH…SRMPRNVDTH (64 aa). The tract at residues 148–168 is disordered; sequence QRSDGSWGPDGGSGDHPSSPL. Aspartate 597, aspartate 601, asparagine 742, serine 746, and glutamate 750 together coordinate Mg(2+). The DDXXD motif signature appears at 597 to 601; that stretch reads DDLFD.

It belongs to the terpene synthase family. Mg(2+) serves as cofactor.

The protein localises to the plastid. The protein resides in the chloroplast. It catalyses the reaction ent-copalyl diphosphate = dolabradiene + diphosphate. Functionally, involved in the production of antifungal dolabralexin phytoalexins in response to biotic and abiotic stresses. In response to fungal infection and in associtation with AN2, is involved in the production dolabradiene, a type of antifungal phytoalexin. Converts ent-copalyl disphosphate (ent-CPP) to dolabradiene. This is Dolabradiene synthase KSL4, chloroplastic from Zea mays (Maize).